The following is a 366-amino-acid chain: tRNA/tmRNA (uracil-C(5))-methyltransferase (366 aa).

The S-adenosyl-L-methionine site is built by Gln190, Tyr218, Asn223, Glu239, and Asp299. Cys324 serves as the catalytic Nucleophile. Glu358 acts as the Proton acceptor in catalysis.

Belongs to the class I-like SAM-binding methyltransferase superfamily. RNA M5U methyltransferase family. TrmA subfamily.

The catalysed reaction is uridine(54) in tRNA + S-adenosyl-L-methionine = 5-methyluridine(54) in tRNA + S-adenosyl-L-homocysteine + H(+). The enzyme catalyses uridine(341) in tmRNA + S-adenosyl-L-methionine = 5-methyluridine(341) in tmRNA + S-adenosyl-L-homocysteine + H(+). In terms of biological role, dual-specificity methyltransferase that catalyzes the formation of 5-methyluridine at position 54 (m5U54) in all tRNAs, and that of position 341 (m5U341) in tmRNA (transfer-mRNA). The polypeptide is tRNA/tmRNA (uracil-C(5))-methyltransferase (Escherichia coli O7:K1 (strain IAI39 / ExPEC)).